The sequence spans 263 residues: Small ribosomal subunit protein uS2 (263 aa).

The protein belongs to the universal ribosomal protein uS2 family.

This is Small ribosomal subunit protein uS2 from Roseiflexus castenholzii (strain DSM 13941 / HLO8).